The primary structure comprises 166 residues: Phospholipase A2 inhibitor clone 11 (166 aa).

The signal sequence occupies residues 1 to 19; it reads MRLILLSGLLLLGIFLANG. Residues 46 to 161 form the C-type lectin domain; that stretch reads LKGSFLIVHK…CDDNLLVVCE (116 aa). 2 disulfide bridges follow: C83–C160 and C138–C152. N122 is a glycosylation site (N-linked (GlcNAc...) asparagine).

It belongs to the alpha-type phospholipase A2 inhibitor family. In terms of assembly, homotrimer; non-covalently linked. As to expression, expressed by the liver.

The protein resides in the secreted. Functionally, this phospholipase A2 inhibitor binds directly phospholipase A2 in the presence or absence of calcium. The protein is Phospholipase A2 inhibitor clone 11 of Bothrops neuwiedi (Neuwied's lancehead).